A 107-amino-acid chain; its full sequence is uncharacterized protein (107 aa).

Residues 1–20 (MYIKGRLIFFFVVLVIALCS) form the signal peptide.

This is an uncharacterized protein from Listeria monocytogenes serovar 1/2a (strain ATCC BAA-679 / EGD-e).